The chain runs to 455 residues: Bifunctional protein GlmU (455 aa).

The segment at 1–230 is pyrophosphorylase; sequence MTKRNAIILA…FDESMGVNDR (230 aa). UDP-N-acetyl-alpha-D-glucosamine is bound by residues 9-12, K23, Q73, 78-79, 101-103, G140, E155, N170, and N228; these read LAAG, GT, and SGD. Position 103 (D103) interacts with Mg(2+). Position 228 (N228) interacts with Mg(2+). Positions 231-251 are linker; that stretch reads VALARANKVMRNRINTHWMRE. An N-acetyltransferase region spans residues 252 to 455; sequence GVSMIDPETT…KENYAKKLPW (204 aa). R333 and K351 together coordinate UDP-N-acetyl-alpha-D-glucosamine. H363 functions as the Proton acceptor in the catalytic mechanism. Y366 and N377 together coordinate UDP-N-acetyl-alpha-D-glucosamine. Residues 386-387, S405, A423, and R440 each bind acetyl-CoA; that span reads NY.

In the N-terminal section; belongs to the N-acetylglucosamine-1-phosphate uridyltransferase family. It in the C-terminal section; belongs to the transferase hexapeptide repeat family. As to quaternary structure, homotrimer. Mg(2+) is required as a cofactor.

It is found in the cytoplasm. The catalysed reaction is alpha-D-glucosamine 1-phosphate + acetyl-CoA = N-acetyl-alpha-D-glucosamine 1-phosphate + CoA + H(+). It carries out the reaction N-acetyl-alpha-D-glucosamine 1-phosphate + UTP + H(+) = UDP-N-acetyl-alpha-D-glucosamine + diphosphate. It functions in the pathway nucleotide-sugar biosynthesis; UDP-N-acetyl-alpha-D-glucosamine biosynthesis; N-acetyl-alpha-D-glucosamine 1-phosphate from alpha-D-glucosamine 6-phosphate (route II): step 2/2. It participates in nucleotide-sugar biosynthesis; UDP-N-acetyl-alpha-D-glucosamine biosynthesis; UDP-N-acetyl-alpha-D-glucosamine from N-acetyl-alpha-D-glucosamine 1-phosphate: step 1/1. Its pathway is bacterial outer membrane biogenesis; LPS lipid A biosynthesis. Functionally, catalyzes the last two sequential reactions in the de novo biosynthetic pathway for UDP-N-acetylglucosamine (UDP-GlcNAc). The C-terminal domain catalyzes the transfer of acetyl group from acetyl coenzyme A to glucosamine-1-phosphate (GlcN-1-P) to produce N-acetylglucosamine-1-phosphate (GlcNAc-1-P), which is converted into UDP-GlcNAc by the transfer of uridine 5-monophosphate (from uridine 5-triphosphate), a reaction catalyzed by the N-terminal domain. The polypeptide is Bifunctional protein GlmU (Limosilactobacillus reuteri (strain DSM 20016) (Lactobacillus reuteri)).